A 120-amino-acid polypeptide reads, in one-letter code: Seripauperin-4 (120 aa).

A helical transmembrane segment spans residues Ile-7–Ile-24.

The protein belongs to the SRP1/TIP1 family. Seripauperin subfamily.

Its subcellular location is the membrane. The sequence is that of Seripauperin-4 (PAU4) from Saccharomyces cerevisiae (strain ATCC 204508 / S288c) (Baker's yeast).